The following is a 370-amino-acid chain: Phosphoserine aminotransferase (370 aa).

The residue at position 1 (Met1) is an N-acetylmethionine. O-phospho-L-serine contacts are provided by His44 and Arg45. Residue Lys51 is modified to N6-acetyllysine. Gly79, Cys80, and Trp107 together coordinate pyridoxal 5'-phosphate. At Lys127 the chain carries N6-acetyllysine. 3 residues coordinate pyridoxal 5'-phosphate: Thr156, Asp176, and Gln199. An N6-(pyridoxal phosphate)lysine modification is found at Lys200. 2 residues coordinate pyridoxal 5'-phosphate: Asn241 and Thr242. N6-acetyllysine occurs at positions 269, 318, and 323. Phosphoserine is present on Ser331. At Lys333 the chain carries N6-acetyllysine. Positions 335, 336, and 342 each coordinate O-phospho-L-serine.

The protein belongs to the class-V pyridoxal-phosphate-dependent aminotransferase family. SerC subfamily. Homodimer. Pyridoxal 5'-phosphate serves as cofactor.

It catalyses the reaction O-phospho-L-serine + 2-oxoglutarate = 3-phosphooxypyruvate + L-glutamate. The protein operates within amino-acid biosynthesis; L-serine biosynthesis; L-serine from 3-phospho-D-glycerate: step 2/3. Its function is as follows. Involved in L-serine biosynthesis via the phosphorylated pathway, a three-step pathway converting the glycolytic intermediate 3-phospho-D-glycerate into L-serine. Catalyzes the second step, that is the pyridoxal 5'-phosphate-dependent transamination of 3-phosphohydroxypyruvate and L-glutamate to O-phosphoserine (OPS) and alpha-ketoglutarate. The sequence is that of Phosphoserine aminotransferase (PSAT1) from Oryctolagus cuniculus (Rabbit).